The chain runs to 860 residues: Leucine--tRNA ligase (860 aa).

Positions P42–H52 match the 'HIGH' region motif. A 'KMSKS' region motif is present at residues K619–S623. K622 contributes to the ATP binding site.

The protein belongs to the class-I aminoacyl-tRNA synthetase family.

It is found in the cytoplasm. It catalyses the reaction tRNA(Leu) + L-leucine + ATP = L-leucyl-tRNA(Leu) + AMP + diphosphate. The protein is Leucine--tRNA ligase of Yersinia pestis bv. Antiqua (strain Angola).